Reading from the N-terminus, the 154-residue chain is Bacterial ferritin (154 aa).

Positions 1–145 constitute a Ferritin-like diiron domain; the sequence is MQGHPEVIDY…QQLGLIARMG (145 aa). 9 residues coordinate Fe(3+): Glu18, His46, Glu47, Glu50, Glu51, His54, Glu93, Asp129, and His130.

The protein belongs to the bacterioferritin family. The bacterioferritin (BFR) complex is formed of 24 subunits (FtnA and BfrB) arranged as 12 homodimers. The holocomplex contains about 8.7% Fe and 8.0% phosphate. In vivo purifies with BfrB in varying ratios, depending on the O(2) content; as O(2) decreases FtnA content rises. Pure FtnA BFR complexes are not isolated in situ, although in a bfrB deletion some iron will accumulate in FtnA ferritin complexes. Upon crystallization forms homooligomers of 24 subunits, the BFR complex, arranged as 12 dimers, that are packed together to form an approximately spherical molecule with a central cavity, in which large amounts of iron can be deposited. The BFR shell has three- and four-fold pores; Fe(2+) may move in and out of the shell via the four-fold pores. Does not interact with Bfd.

It localises to the cytoplasm. The enzyme catalyses 4 Fe(2+) + O2 + 4 H(+) = 4 Fe(3+) + 2 H2O. The catalysed reaction is Fe(2+)(in) = Fe(2+)(out). Plays a role in catalase A (katA) expression; activity is required for optimal KatA activity and resistance to H(2)O(2). Iron-storage protein that is part of the heterooligomeric bacterioferritin (BFR) complex. The ferroxidase center binds Fe(2+), oxidizes it using dioxygen to Fe(3+), and participates in subsequent Fe(3+) oxide mineral core formation within the central cavity of the BFR protein shell. Can store up to 520 iron atoms per ferritin protein molecule. Iron release requires only the input of electrons from ferredoxin NADP reductase (FPR), does not require Bfd. Does not bind heme. The sequence is that of Bacterial ferritin from Pseudomonas aeruginosa (strain ATCC 15692 / DSM 22644 / CIP 104116 / JCM 14847 / LMG 12228 / 1C / PRS 101 / PAO1).